A 337-amino-acid polypeptide reads, in one-letter code: Cysteine synthase 3 (337 aa).

Lysine 47 carries the N6-(pyridoxal phosphate)lysine modification. Pyridoxal 5'-phosphate is bound by residues asparagine 78, 182-186 (GSSGT), and serine 270.

Belongs to the cysteine synthase/cystathionine beta-synthase family. As to quaternary structure, homodimer. Pyridoxal 5'-phosphate serves as cofactor.

It catalyses the reaction O-acetyl-L-serine + hydrogen sulfide = L-cysteine + acetate. It participates in amino-acid biosynthesis; L-cysteine biosynthesis; L-cysteine from L-serine: step 2/2. In terms of biological role, primarily catalyzes the formation of cysteine and acetate from O-acetylserine and hydrogen sulfide. Can also catalyze the formation of cysteine and acetate from S-sulfocysteine and hydrogen sulfide and the formation of cyanoalanine and hydrogen sulfide from either S-sulfocysteine or O-acetylserine and hydrogen cyanide. The sequence is that of Cysteine synthase 3 from Caenorhabditis elegans.